Consider the following 537-residue polypeptide: Sodium/hydrogen exchanger 9B2 (537 aa).

The span at 1-10 shows a compositional bias: basic and acidic residues; that stretch reads MGDEDKRITY. The interval 1-33 is disordered; sequence MGDEDKRITYEDSEPSTGMNYTPSMHQETQEET. The Cytoplasmic segment spans residues 1 to 86; sequence MGDEDKRITY…ACPPHGLLDR (86 aa). Residues 15-27 show a composition bias toward polar residues; sequence PSTGMNYTPSMHQ. Serine 49 bears the Phosphoserine mark. The chain crosses the membrane as a helical span at residues 87–104; sequence VVTNVTIIVLLWAVIWSI. Residues 105-113 are Extracellular-facing; it reads TGSECLPGG. Residues 114-133 traverse the membrane as a helical segment; that stretch reads NLFGIIILFYCAIIGGKLLG. The Cytoplasmic segment spans residues 134 to 144; it reads LIKLPTLPPLP. Residues 145 to 161 traverse the membrane as a helical segment; that stretch reads SLLGMLLAGFLIRNIPV. At 162-171 the chain is on the extracellular side; it reads INDNVQIKHK. Residues 172 to 189 form a helical membrane-spanning segment; that stretch reads WSSSLRSIALSIILVRAG. At 190–200 the chain is on the cytoplasmic side; that stretch reads LGLDSKALKKL. A helical transmembrane segment spans residues 201 to 227; that stretch reads KGVCVRLSMGPCIVEACTSALLAHYLL. The Extracellular portion of the chain corresponds to 228–233; the sequence is GLPWQW. The helical transmembrane segment at 234–242 threads the bilayer; the sequence is GFILGFVLG. The Cytoplasmic segment spans residues 243-270; it reads AVSPAVVVPSMLLLQGGGYGVEKGVPTL. Residues valine 244, glycine 275, aspartate 278, and aspartate 279 each contribute to the Na(+) site. A helical membrane pass occupies residues 271–290; that stretch reads LMAAGSFDDILAITGFNTCL. Over 291–300 the chain is Extracellular; sequence GIAFSTGSTV. Residues 301–324 traverse the membrane as a helical segment; sequence FNVLRGVLEVVIGVATGSVLGFFI. The Cytoplasmic portion of the chain corresponds to 325–339; that stretch reads QYFPSCDQDKLVCKR. A helical membrane pass occupies residues 340–357; it reads TFLVLGLSVLAVFSSVHF. The Extracellular portion of the chain corresponds to 358–361; the sequence is GFPG. Residues 362–373 form a helical membrane-spanning segment; the sequence is SGGLCTLVMAFL. At 374-390 the chain is on the cytoplasmic side; sequence AGMGWTSEKAEVEKIIA. Residues 391-411 form a helical membrane-spanning segment; sequence VAWDIFQPLLFGLIGAEVSIA. Residues 412-417 are Extracellular-facing; that stretch reads SLRPET. A helical transmembrane segment spans residues 418-440; sequence VGLCVATVGIAVLIRILTTFLMV. At 441 to 461 the chain is on the cytoplasmic side; the sequence is CFAGFNLKEKIFISFAWLPKA. Residues 462-473 traverse the membrane as a helical segment; that stretch reads TVQAAIGSVALD. Residues 474 to 486 are Extracellular-facing; it reads TARSHGEKQLEDY. Residues 487–509 traverse the membrane as a helical segment; sequence GMDVLTVAFLSILITAPIGSLLI. The Cytoplasmic portion of the chain corresponds to 510–537; it reads GLLGPRLLQKVEHQNKDEEVQGETSVQV.

Belongs to the monovalent cation:proton antiporter 1 (CPA1) transporter (TC 2.A.36) family. Homodimer; dimerization is essential for SLC9B2 activity. Lipids seem to play a role in the stabilization of the dimerization subdomain.

The protein resides in the cell membrane. It localises to the mitochondrion membrane. It is found in the endosome membrane. Its subcellular location is the recycling endosome membrane. The protein localises to the cytoplasmic vesicle. The protein resides in the secretory vesicle. It localises to the synaptic vesicle membrane. It is found in the basolateral cell membrane. Its subcellular location is the apical cell membrane. It catalyses the reaction Li(+)(out) + H(+)(in) = Li(+)(in) + H(+)(out). The catalysed reaction is Li(+)(in) + Na(+)(out) = Li(+)(out) + Na(+)(in). The enzyme catalyses Na(+)(in) + H(+)(out) = Na(+)(out) + H(+)(in). Its activity is regulated as follows. Allosterically inhibited by the N-terminal domain. Inhibited by phloretin. Electroneutral Na(+) Li(+)/H(+) antiporter that extrudes Na(+) or Li(+) in exchange for external protons across the membrane. Uses the proton gradient/membrane potential to extrude sodium. Contributes to the regulation of intracellular pH and sodium homeostasis. Also able to mediate Na(+)/Li(+) antiporter activity in kidney. May play a physiological role in renal tubular function and blood pressure homeostasis. Plays an important role for insulin secretion and clathrin-mediated endocytosis in beta-cells. Involved in sperm motility and fertility. It is controversial whether SLC9B2 plays a role in osteoclast differentiation or not. This is Sodium/hydrogen exchanger 9B2 (SLC9B2) from Pongo abelii (Sumatran orangutan).